Here is a 257-residue protein sequence, read N- to C-terminus: Small ribosomal subunit protein uS3 (257 aa).

One can recognise a KH type-2 domain in the interval 40-110 (IRKYLSTKYK…LVSLKVVEVQ (71 aa)). The disordered stretch occupies residues 223-257 (ANKEFSRSSKPKKGSFNRSSRSKNTKPAPKQAVSE). Over residues 231–246 (SKPKKGSFNRSSRSKN) the composition is skewed to basic residues.

It belongs to the universal ribosomal protein uS3 family. In terms of assembly, part of the 30S ribosomal subunit. Forms a tight complex with proteins S10 and S14.

Binds the lower part of the 30S subunit head. Binds mRNA in the 70S ribosome, positioning it for translation. This is Small ribosomal subunit protein uS3 from Ureaplasma parvum serovar 3 (strain ATCC 27815 / 27 / NCTC 11736).